Here is a 123-residue protein sequence, read N- to C-terminus: DNA-directed RNA polymerase I subunit RPA12 (123 aa).

6 residues coordinate Zn(2+): Cys17, Cys20, Cys35, Cys38, Cys84, and Cys87. The C4-type zinc-finger motif lies at 17–38 (CPDCGSVLPLPGIQDTVICSRC). A TFIIS-type zinc finger spans residues 80-120 (IDRRCPRCGHEGMAYHTRQMRSADEGQTVFYTCINCKFQEK). The Hairpin signature appears at 103 to 104 (DE). Cys112 and Cys115 together coordinate Zn(2+).

The protein belongs to the archaeal RpoM/eukaryotic RPA12/RPB9/RPC11 RNA polymerase family. In terms of assembly, component of the RNA polymerase I (Pol I) complex consisting of 13 subunits: a ten-subunit catalytic core composed of POLR1A/RPA1, POLR1B/RPA2, POLR1C/RPAC1, POLR1D/RPAC2, POLR1H/RPA12, POLR2E/RPABC1, POLR2F/RPABC2, POLR2H/RPABC3, POLR2K/RPABC4 and POLR2L/RPABC5; a mobile stalk subunit POLR1F/RPA43 protruding from the core and additional subunits homologous to general transcription factors POLR1E/RPA49 and POLR1G/RPA34. Part of Pol I pre-initiation complex (PIC), in which Pol I core assembles with RRN3 and promoter-bound UTBF and SL1/TIF-IB complex.

Its subcellular location is the nucleus. It localises to the nucleolus. Core component of RNA polymerase I (Pol I), a DNA-dependent RNA polymerase which synthesizes ribosomal RNA precursors using the four ribonucleoside triphosphates as substrates. Can mediate Pol I proofreading of the nascent RNA transcript. Anchors into the Pol I active site to monitor transcription fidelity and cleave mis-incorporated 5'-ribonucleotides. This Mus musculus (Mouse) protein is DNA-directed RNA polymerase I subunit RPA12.